The primary structure comprises 104 residues: Nucleoid-associated protein Amuc_1227 (104 aa).

It belongs to the YbaB/EbfC family. As to quaternary structure, homodimer.

Its subcellular location is the cytoplasm. The protein localises to the nucleoid. In terms of biological role, binds to DNA and alters its conformation. May be involved in regulation of gene expression, nucleoid organization and DNA protection. The sequence is that of Nucleoid-associated protein Amuc_1227 from Akkermansia muciniphila (strain ATCC BAA-835 / DSM 22959 / JCM 33894 / BCRC 81048 / CCUG 64013 / CIP 107961 / Muc).